The sequence spans 426 residues: Chaperone SurA (426 aa).

The signal sequence occupies residues 1-13 (MLGALFLSTAASA). 2 consecutive PpiC domains span residues 164 to 265 (SEEL…KLLD) and 274 to 373 (RDEV…EVLG).

The protein localises to the periplasm. It carries out the reaction [protein]-peptidylproline (omega=180) = [protein]-peptidylproline (omega=0). In terms of biological role, chaperone involved in the correct folding and assembly of outer membrane proteins. Recognizes specific patterns of aromatic residues and the orientation of their side chains, which are found more frequently in integral outer membrane proteins. May act in both early periplasmic and late outer membrane-associated steps of protein maturation. This Pseudomonas fluorescens (strain ATCC BAA-477 / NRRL B-23932 / Pf-5) protein is Chaperone SurA.